A 309-amino-acid polypeptide reads, in one-letter code: NADH-cytochrome b5 reductase 1 (309 aa).

Residues 30–50 (FVPYAVALTAILAGLKLFTGG) traverse the membrane as a helical segment. The region spanning 60–165 (TEFQEFVLKE…RGPKGAMVYT (106 aa)) is the FAD-binding FR-type domain. Residues 145–160 (TTLKIGDTMKVRGPKG) and 171–208 (HIGMIAGGTGITPMLQIIKAVIRNRPRNGGNDTTKLDL) contribute to the FAD site.

It belongs to the flavoprotein pyridine nucleotide cytochrome reductase family. As to quaternary structure, monomer. Component of the 2-(3-amino-3-carboxypropyl)histidine synthase complex composed of dph1, dph2, dph3 and a NADH-dependent reductase, predominantly cbr1. The cofactor is FAD.

It localises to the mitochondrion outer membrane. The enzyme catalyses 2 Fe(III)-[cytochrome b5] + NADH = 2 Fe(II)-[cytochrome b5] + NAD(+) + H(+). It carries out the reaction 2 Fe(3+)-[Dph3] + NADH = 2 Fe(2+)-[Dph3] + NAD(+) + H(+). Its pathway is protein modification; peptidyl-diphthamide biosynthesis. In terms of biological role, NADH-dependent reductase for dph3 and cytochrome b5. Required for the first step of diphthamide biosynthesis, a post-translational modification of histidine which occurs in elongation factor 2. Dph1 and dph2 transfer a 3-amino-3-carboxypropyl (ACP) group from S-adenosyl-L-methionine (SAM) to a histidine residue, the reaction is assisted by a reduction system comprising dph3 and a NADH-dependent reductase, predominantly cbr1. By reducing dph3, also involved in the formation of the tRNA wobble base modification mcm5s 2U (5-methoxycarbonylmethyl-2-thiouridine), mediated by the elongator complex. The cytochrome b5/NADH cytochrome b5 reductase electron transfer system supports the catalytic activity of several sterol biosynthetic enzymes. The polypeptide is NADH-cytochrome b5 reductase 1 (cbr1) (Neosartorya fischeri (strain ATCC 1020 / DSM 3700 / CBS 544.65 / FGSC A1164 / JCM 1740 / NRRL 181 / WB 181) (Aspergillus fischerianus)).